Here is a 273-residue protein sequence, read N- to C-terminus: ATP synthase F(1) complex subunit gamma, mitochondrial (273 aa).

Position 14 is an N6-acetyllysine (lysine 14). Lysine 24 bears the N6-succinyllysine mark. An N6-acetyllysine modification is found at lysine 30. Position 90 is an N6-acetyllysine; alternate (lysine 90). Lysine 90 bears the N6-succinyllysine; alternate mark. An N6-acetyllysine modification is found at lysine 113. Residue serine 121 is modified to Phosphoserine. N6-acetyllysine; alternate is present on lysine 129. Lysine 129 is subject to N6-succinyllysine; alternate. An N6-acetyllysine modification is found at lysine 172. Lysine 245 is subject to N6-succinyllysine.

This sequence belongs to the ATPase gamma chain family. Component of the ATP synthase complex composed at least of ATP5F1A/subunit alpha, ATP5F1B/subunit beta, ATP5MC1/subunit c (homooctomer), MT-ATP6/subunit a, MT-ATP8/subunit 8, ATP5ME/subunit e, ATP5MF/subunit f, ATP5MG/subunit g, ATP5MK/subunit k, ATP5MJ/subunit j, ATP5F1C/subunit gamma, ATP5F1D/subunit delta, ATP5F1E/subunit epsilon, ATP5PF/subunit F6, ATP5PB/subunit b, ATP5PD/subunit d, ATP5PO/subunit OSCP. ATP synthase complex consists of a soluble F(1) head domain (subunits alpha(3) and beta(3)) - the catalytic core - and a membrane F(0) domain - the membrane proton channel (subunits c, a, 8, e, f, g, k and j). These two domains are linked by a central stalk (subunits gamma, delta, and epsilon) rotating inside the F1 region and a stationary peripheral stalk (subunits F6, b, d, and OSCP). Interacts with FLVCR2; this interaction occurs in the absence of heme and is disrupted upon heme binding.

It is found in the mitochondrion inner membrane. In terms of biological role, subunit gamma, of the mitochondrial membrane ATP synthase complex (F(1)F(0) ATP synthase or Complex V) that produces ATP from ADP in the presence of a proton gradient across the membrane which is generated by electron transport complexes of the respiratory chain. ATP synthase complex consist of a soluble F(1) head domain - the catalytic core - and a membrane F(1) domain - the membrane proton channel. These two domains are linked by a central stalk rotating inside the F(1) region and a stationary peripheral stalk. During catalysis, ATP synthesis in the catalytic domain of F(1) is coupled via a rotary mechanism of the central stalk subunits to proton translocation. In vivo, can only synthesize ATP although its ATP hydrolase activity can be activated artificially in vitro. With the central stalk subunit delta, is essential for the biogenesis of F(1) catalytic part of the ATP synthase complex namely in the formation of F1 assembly intermediate. The protein is ATP synthase F(1) complex subunit gamma, mitochondrial of Rattus norvegicus (Rat).